The primary structure comprises 289 residues: Phosphatidylserine decarboxylase proenzyme (289 aa).

Catalysis depends on charge relay system; for autoendoproteolytic cleavage activity residues Asp89, His146, and Ser252. Ser252 functions as the Schiff-base intermediate with substrate; via pyruvic acid; for decarboxylase activity in the catalytic mechanism. Pyruvic acid (Ser); by autocatalysis is present on Ser252.

This sequence belongs to the phosphatidylserine decarboxylase family. PSD-B subfamily. Prokaryotic type I sub-subfamily. As to quaternary structure, heterodimer of a large membrane-associated beta subunit and a small pyruvoyl-containing alpha subunit. The cofactor is pyruvate. In terms of processing, is synthesized initially as an inactive proenzyme. Formation of the active enzyme involves a self-maturation process in which the active site pyruvoyl group is generated from an internal serine residue via an autocatalytic post-translational modification. Two non-identical subunits are generated from the proenzyme in this reaction, and the pyruvate is formed at the N-terminus of the alpha chain, which is derived from the carboxyl end of the proenzyme. The autoendoproteolytic cleavage occurs by a canonical serine protease mechanism, in which the side chain hydroxyl group of the serine supplies its oxygen atom to form the C-terminus of the beta chain, while the remainder of the serine residue undergoes an oxidative deamination to produce ammonia and the pyruvoyl prosthetic group on the alpha chain. During this reaction, the Ser that is part of the protease active site of the proenzyme becomes the pyruvoyl prosthetic group, which constitutes an essential element of the active site of the mature decarboxylase.

The protein localises to the cell membrane. It catalyses the reaction a 1,2-diacyl-sn-glycero-3-phospho-L-serine + H(+) = a 1,2-diacyl-sn-glycero-3-phosphoethanolamine + CO2. It participates in phospholipid metabolism; phosphatidylethanolamine biosynthesis; phosphatidylethanolamine from CDP-diacylglycerol: step 2/2. Functionally, catalyzes the formation of phosphatidylethanolamine (PtdEtn) from phosphatidylserine (PtdSer). The chain is Phosphatidylserine decarboxylase proenzyme from Shewanella sp. (strain W3-18-1).